The chain runs to 491 residues: Ketol-acid reductoisomerase (NADP(+)) (491 aa).

A KARI N-terminal Rossmann domain is found at 15–208 (AQLGTCRFME…GGHRAGVLES (194 aa)). Residues 45 to 48 (CGAQ), Arg68, Arg76, Ser78, and 108 to 110 (DKQ) each bind NADP(+). His132 is a catalytic residue. Gly158 is a binding site for NADP(+). KARI C-terminal knotted domains lie at 209 to 353 (SFVA…KEQE) and 354 to 486 (YFDK…MTAM). The Mg(2+) site is built by Asp217, Glu221, Glu389, and Glu393. Ser414 serves as a coordination point for substrate.

The protein belongs to the ketol-acid reductoisomerase family. The cofactor is Mg(2+).

The catalysed reaction is (2R)-2,3-dihydroxy-3-methylbutanoate + NADP(+) = (2S)-2-acetolactate + NADPH + H(+). It carries out the reaction (2R,3R)-2,3-dihydroxy-3-methylpentanoate + NADP(+) = (S)-2-ethyl-2-hydroxy-3-oxobutanoate + NADPH + H(+). It functions in the pathway amino-acid biosynthesis; L-isoleucine biosynthesis; L-isoleucine from 2-oxobutanoate: step 2/4. The protein operates within amino-acid biosynthesis; L-valine biosynthesis; L-valine from pyruvate: step 2/4. In terms of biological role, involved in the biosynthesis of branched-chain amino acids (BCAA). Catalyzes an alkyl-migration followed by a ketol-acid reduction of (S)-2-acetolactate (S2AL) to yield (R)-2,3-dihydroxy-isovalerate. In the isomerase reaction, S2AL is rearranged via a Mg-dependent methyl migration to produce 3-hydroxy-3-methyl-2-ketobutyrate (HMKB). In the reductase reaction, this 2-ketoacid undergoes a metal-dependent reduction by NADPH to yield (R)-2,3-dihydroxy-isovalerate. This Christiangramia forsetii (strain DSM 17595 / CGMCC 1.15422 / KT0803) (Gramella forsetii) protein is Ketol-acid reductoisomerase (NADP(+)).